The primary structure comprises 267 residues: Very long chain fatty acid elongase 6 (267 aa).

Asn2 carries N-linked (GlcNAc...) asparagine glycosylation. Transmembrane regions (helical) follow at residues 34 to 51 (FLFS…RHLM), 70 to 90 (LAVF…YILM), 111 to 131 (FWAY…IFII), 136 to 156 (KLIF…WYSY), 159 to 179 (MVAG…VMYS), 197 to 217 (FITL…YLVF), and 234 to 254 (IFWS…FFFE).

This sequence belongs to the ELO family. ELOVL6 subfamily. In terms of processing, N-Glycosylated. As to expression, expressed in liver and barely in brain.

The protein localises to the endoplasmic reticulum membrane. It carries out the reaction a very-long-chain acyl-CoA + malonyl-CoA + H(+) = a very-long-chain 3-oxoacyl-CoA + CO2 + CoA. The catalysed reaction is hexadecanoyl-CoA + malonyl-CoA + H(+) = 3-oxooctadecanoyl-CoA + CO2 + CoA. It catalyses the reaction (9Z)-hexadecenoyl-CoA + malonyl-CoA + H(+) = 3-oxo-(11Z)-octadecenoyl-CoA + CO2 + CoA. The enzyme catalyses dodecanoyl-CoA + malonyl-CoA + H(+) = 3-oxotetradecanoyl-CoA + CO2 + CoA. It carries out the reaction tetradecanoyl-CoA + malonyl-CoA + H(+) = 3-oxohexadecanoyl-CoA + CO2 + CoA. The catalysed reaction is (9Z)-octadecenoyl-CoA + malonyl-CoA + H(+) = 3-oxo-(11Z)-eicosenoyl-CoA + CO2 + CoA. It catalyses the reaction (9Z,12Z)-octadecadienoyl-CoA + malonyl-CoA + H(+) = (11Z,14Z)-3-oxoicosa-11,14-dienoyl-CoA + CO2 + CoA. The enzyme catalyses (9Z,12Z,15Z)-octadecatrienoyl-CoA + malonyl-CoA + H(+) = (11Z,14Z,17Z)-3-oxoeicosatrienoyl-CoA + CO2 + CoA. Its pathway is lipid metabolism; fatty acid biosynthesis. Its activity is regulated as follows. The reaction is stimulated by the presence of HSD17B12, the enzyme catalyzing the second step of the elongation cycle. In terms of biological role, catalyzes the first and rate-limiting reaction of the four reactions that constitute the long-chain fatty acids elongation cycle. This endoplasmic reticulum-bound enzymatic process allows the addition of 2 carbons to the chain of long- and very long-chain fatty acids (VLCFAs) per cycle. Condensing enzyme that elongates fatty acids with 12, 14 and 16 carbons with higher activity toward C16:0 acyl-CoAs. Catalyzes the synthesis of unsaturated C16 long chain fatty acids and, to a lesser extent, C18:0 and those with low desaturation degree. May participate in the production of saturated and monounsaturated VLCFAs of different chain lengths that are involved in multiple biological processes as precursors of membrane lipids and lipid mediators. The polypeptide is Very long chain fatty acid elongase 6 (Rattus norvegicus (Rat)).